The following is a 204-amino-acid chain: Factor arrest protein 3 (204 aa).

In terms of assembly, component of a complex at least composed of FAR3, FAR7, FAR8, FAR10, FAR11 and VPS64.

It localises to the endoplasmic reticulum. Its function is as follows. Participates in the control of the reentry into the cell cycle following pheromone treatment. The sequence is that of Factor arrest protein 3 (FAR3) from Saccharomyces cerevisiae (strain ATCC 204508 / S288c) (Baker's yeast).